The primary structure comprises 312 residues: Carbonic anhydrase 4 (312 aa).

Residues 1-18 (MRMLLALLALSAARPSAS) form the signal peptide. The 265-residue stretch at 21–285 (SHWCYEVQAE…LGQRTVIKSG (265 aa)) folds into the Alpha-carbonic anhydrase domain. 2 disulfide bridges follow: Cys-24–Cys-36 and Cys-46–Cys-229. His-88 (proton donor/acceptor) is an active-site residue. Zn(2+) contacts are provided by His-115, His-117, and His-140. 225–226 (TT) lines the substrate pocket. The GPI-anchor amidated serine moiety is linked to residue Ser-284. The propeptide at 285–312 (GAPGRPLPWALPALLGPMLACLLAGFLR) is removed in mature form.

The protein belongs to the alpha-carbonic anhydrase family. Interacts with SLC4A4. It depends on Zn(2+) as a cofactor. As to expression, expressed in the endothelium of the choriocapillaris in eyes (at protein level). Not expressed in the retinal epithelium at detectable levels.

The protein localises to the cell membrane. It catalyses the reaction hydrogencarbonate + H(+) = CO2 + H2O. With respect to regulation, activated by histamine, L-adrenaline, D-phenylalanine, L- and D-histidine. Inhibited by coumarins, saccharin, sulfonamide derivatives such as acetazolamide and Foscarnet (phosphonoformate trisodium salt). Its function is as follows. Catalyzes the reversible hydration of carbon dioxide into bicarbonate and protons and thus is essential to maintaining intracellular and extracellular pH. May stimulate the sodium/bicarbonate transporter activity of SLC4A4 that acts in pH homeostasis. It is essential for acid overload removal from the retina and retina epithelium, and acid release in the choriocapillaris in the choroid. The chain is Carbonic anhydrase 4 from Homo sapiens (Human).